Here is a 290-residue protein sequence, read N- to C-terminus: Expansin-A26 (290 aa).

Positions 1–29 are cleaved as a signal peptide; sequence MDTTTTMAPLPLLTTTSLLLFFFLASSFA. The disordered stretch occupies residues 45-67; it reads DGGGDGEGGGGGDGEGGGGGGGA. The Expansin-like EG45 domain maps to 101–196; sequence GGACGYKDAD…RKVACVRQGG (96 aa). An Expansin-like CBD domain is found at 206 to 286; it reads SYNMVMVKNV…DWTYDNTYQA (81 aa). N-linked (GlcNAc...) asparagine glycosylation occurs at Asn250.

Belongs to the expansin family. Expansin A subfamily. In terms of tissue distribution, expressed in flowers.

It localises to the secreted. The protein localises to the cell wall. It is found in the membrane. May cause loosening and extension of plant cell walls by disrupting non-covalent bonding between cellulose microfibrils and matrix glucans. No enzymatic activity has been found. May be required for rapid internodal elongation in deepwater rice during submergence. The protein is Expansin-A26 (EXPA26) of Oryza sativa subsp. japonica (Rice).